A 98-amino-acid chain; its full sequence is MDFRVLLVISPIIFAWIFTVFWLGKWDVFRLTPFGLPKRGVAPFENYQVWGDSAVVPNTGRPSEGYPVFTVRTAAVNALGIPTVFFLGAILAMQFKSY.

Transmembrane regions (helical) follow at residues 5 to 25 and 73 to 93; these read VLLV…WLGK and TAAV…ILAM.

Belongs to the PsbE/PsbF family.

The protein resides in the membrane. Its function is as follows. Unknown. Resembles PsbF, one of the subunits of the photosystem II reaction center. However, it encodes asparagine rather than histidine at the site PsbF uses to bind heme. The polypeptide is PsbF-like protein (Prochlorococcus marinus (strain MIT 9312)).